Here is a 553-residue protein sequence, read N- to C-terminus: Salicylyl-CoA synthase / salicylate adenylyltransferase (553 aa).

G203 contacts ATP. Position 246–247 (246–247 (HN)) interacts with substrate. ATP-binding residues include G320, V342, D426, R441, and K533. A substrate-binding site is contributed by K533.

It belongs to the ATP-dependent AMP-binding enzyme family.

The catalysed reaction is salicylate + ATP + CoA = 2-hydroxybenzoyl-CoA + AMP + diphosphate. In terms of biological role, involved in the degradation of salicylate via a pathway involving coenzyme A derivative. Catalyzes the conversion of salicylate to salicyloyl-CoA via the formation of a salicylate-adenylate intermediate. The substrate specificity is strong, since benzoate, 3-hydroxybenzoate, 4-hydroxybenzoate, gentisate, 2-aminobenzoate, aminobenzoate, salicylamide, salicylaldoxime and 2-hydroxyphenyl acetate cannot substitute for salicylate. This Streptomyces sp protein is Salicylyl-CoA synthase / salicylate adenylyltransferase.